Consider the following 87-residue polypeptide: Small ribosomal subunit protein uS17 (87 aa).

Belongs to the universal ribosomal protein uS17 family. In terms of assembly, part of the 30S ribosomal subunit.

One of the primary rRNA binding proteins, it binds specifically to the 5'-end of 16S ribosomal RNA. This is Small ribosomal subunit protein uS17 from Bacillus thuringiensis (strain Al Hakam).